We begin with the raw amino-acid sequence, 265 residues long: Probable FAD synthase (265 aa).

It belongs to the PAPS reductase family. FAD1 subfamily.

It carries out the reaction FMN + ATP + H(+) = FAD + diphosphate. Its pathway is cofactor biosynthesis; FAD biosynthesis; FAD from FMN: step 1/1. Adenylates FMN to FAD. In Schizosaccharomyces pombe (strain 972 / ATCC 24843) (Fission yeast), this protein is Probable FAD synthase.